The sequence spans 144 residues: Large ribosomal subunit protein uL15 (144 aa).

Positions 1–49 (MIKLECLQDPSPRKRRTKLLGRGPSSGHGKTSSRGHKGDCSRSGYKRRF) are disordered.

The protein belongs to the universal ribosomal protein uL15 family. In terms of assembly, part of the 50S ribosomal subunit.

Its function is as follows. Binds to the 23S rRNA. In Chlamydia trachomatis serovar A (strain ATCC VR-571B / DSM 19440 / HAR-13), this protein is Large ribosomal subunit protein uL15.